A 148-amino-acid chain; its full sequence is 3-dehydroquinate dehydratase (148 aa).

Y23 serves as the catalytic Proton acceptor. Residues N75, H81, and D88 each contribute to the substrate site. Catalysis depends on H101, which acts as the Proton donor. Residues 102–103 (LS) and R112 each bind substrate.

It belongs to the type-II 3-dehydroquinase family. In terms of assembly, homododecamer.

The catalysed reaction is 3-dehydroquinate = 3-dehydroshikimate + H2O. It functions in the pathway metabolic intermediate biosynthesis; chorismate biosynthesis; chorismate from D-erythrose 4-phosphate and phosphoenolpyruvate: step 3/7. In terms of biological role, catalyzes a trans-dehydration via an enolate intermediate. This is 3-dehydroquinate dehydratase from Xylella fastidiosa (strain 9a5c).